Consider the following 576-residue polypeptide: Gamma-aminobutyric acid receptor subunit beta (576 aa).

A signal peptide spans Met1 to Ala29. The Extracellular portion of the chain corresponds to Met30–Tyr268. Residue Asn56 is glycosylated (N-linked (GlcNAc...) asparagine). A disulfide bond links Cys183 and Cys197. The N-linked (GlcNAc...) asparagine glycan is linked to Asn251. The next 3 helical transmembrane spans lie at Leu269–Leu289, Val298–Pro320, and Val330–Gly350. Over Tyr351–Arg540 the chain is Cytoplasmic. 2 disordered regions span residues Gln372–Ser418 and His452–Glu507. Over residues His398–Val412 the composition is skewed to basic residues. The span at Pro475–Pro490 shows a compositional bias: pro residues. Residues Pro491–Pro501 show a composition bias toward gly residues. A helical membrane pass occupies residues Ile541–Val561.

It belongs to the ligand-gated ion channel (TC 1.A.9) family. Gamma-aminobutyric acid receptor (TC 1.A.9.5) subfamily. As to quaternary structure, homomultimer.

It localises to the postsynaptic cell membrane. The protein resides in the cell membrane. Its function is as follows. GABA, an inhibitory neurotransmitter, mediates neuronal inhibition by binding to the GABA receptor and opening an integral chloride channel. This is Gamma-aminobutyric acid receptor subunit beta from Musca domestica (House fly).